The chain runs to 604 residues: Glucose oxidase (604 aa).

The first 18 residues, 1–18, serve as a signal peptide directing secretion; it reads MKSTIITSILFSVATVQA. Positions 52, 53, and 73 each coordinate FAD. Asn-111 is a glycosylation site (N-linked (GlcNAc...) asparagine). FAD contacts are provided by Ser-125, Asn-129, Gly-130, and Ser-132. The cysteines at positions 186 and 228 are disulfide-linked. Asn-213 carries an N-linked (GlcNAc...) asparagine glycan. Val-272 is a binding site for FAD. 3 N-linked (GlcNAc...) asparagine glycosylation sites follow: Asn-278, Asn-409, and Asn-531. Residue His-537 is the Proton acceptor of the active site. The O2 site is built by Lys-558 and Val-559. Positions 570 and 582 each coordinate FAD.

It belongs to the GMC oxidoreductase family. Homodimer. FAD is required as a cofactor.

Its subcellular location is the secreted. The protein resides in the cell wall. It localises to the cytoplasm. The protein localises to the extracellular space. It is found in the extracellular matrix. The catalysed reaction is beta-D-glucose + O2 = D-glucono-1,5-lactone + H2O2. Its function is as follows. Glucose oxidase catalyzes the oxidation of beta-D-glucose to D-glucono-delta-lactone and hydrogen peroxide in the presence of molecular oxygen. The enzyme also catalyzes the reaction with D-xylose but at a much lower rate. Shows any activities against D-fructose, D-galactose and D-arabinose. The enzyme is cytotoxic for a series of bacteria, yeasts and filamentous fungi and acts primarily via the liberation of H(2)O(2), which is a harmful oxidative stress-generating agent. The chain is Glucose oxidase from Penicillium chrysogenum (Penicillium notatum).